The sequence spans 122 residues: Large ribosomal subunit protein uL14c (122 aa).

Belongs to the universal ribosomal protein uL14 family. In terms of assembly, part of the 50S ribosomal subunit.

It is found in the plastid. It localises to the chloroplast. Binds to 23S rRNA. The sequence is that of Large ribosomal subunit protein uL14c from Daucus carota (Wild carrot).